Reading from the N-terminus, the 335-residue chain is UPF0353 protein MAP_3435c (335 aa).

The next 2 membrane-spanning stretches (helical) occupy residues 18 to 38 and 67 to 87; these read WFFL…VQQF and VPTI…AGPT. The region spanning 98–294 is the VWFA domain; it reads VVMLVIDVSE…DSLKNVYSTL (197 aa). Residues 309–329 traverse the membrane as a helical segment; sequence MAWMLLGAVVLAGAVLAGLLL.

This sequence belongs to the UPF0353 family.

The protein localises to the cell membrane. The protein is UPF0353 protein MAP_3435c of Mycolicibacterium paratuberculosis (strain ATCC BAA-968 / K-10) (Mycobacterium paratuberculosis).